The sequence spans 374 residues: Aminomethyltransferase (374 aa).

It belongs to the GcvT family. As to quaternary structure, the glycine cleavage system is composed of four proteins: P, T, L and H.

The enzyme catalyses N(6)-[(R)-S(8)-aminomethyldihydrolipoyl]-L-lysyl-[protein] + (6S)-5,6,7,8-tetrahydrofolate = N(6)-[(R)-dihydrolipoyl]-L-lysyl-[protein] + (6R)-5,10-methylene-5,6,7,8-tetrahydrofolate + NH4(+). Its function is as follows. The glycine cleavage system catalyzes the degradation of glycine. The sequence is that of Aminomethyltransferase from Caldanaerobacter subterraneus subsp. tengcongensis (strain DSM 15242 / JCM 11007 / NBRC 100824 / MB4) (Thermoanaerobacter tengcongensis).